Reading from the N-terminus, the 61-residue chain is Pleurocidin-like peptide WF3 (61 aa).

The N-terminal stretch at 1–22 is a signal peptide; that stretch reads MKFTATFLVLSLVVLMAEPGEC. Residues 48–61 constitute a propeptide that is removed on maturation; the sequence is YDEQQELNKRAVDE.

The protein belongs to the pleurocidin family.

It localises to the secreted. Its function is as follows. Antimicrobial peptide. The chain is Pleurocidin-like peptide WF3 (ple3) from Pseudopleuronectes americanus (Winter flounder).